Consider the following 77-residue polypeptide: Rhodotorucin-A peptides type 2 (77 aa).

The propeptide occupies 1-3 (MVA). Cys14 carries S-farnesyl cysteine lipidation. A propeptide spanning residues 15–18 (TVAK) is cleaved from the precursor. The S-farnesyl cysteine moiety is linked to residue Cys29. Positions 30-33 (TVSK) are excised as a propeptide. Cys44 carries S-farnesyl cysteine lipidation. Residues 45-48 (TVSK) constitute a propeptide that is removed on maturation. Cys59 carries the S-farnesyl cysteine lipid modification. Residues 60–63 (TVSK) constitute a propeptide that is removed on maturation. Cys74 carries S-farnesyl cysteine lipidation. The propeptide occupies 75–77 (TVA).

Its subcellular location is the cell membrane. Functionally, rhodotorucin-A is a mating pheromone in cells of mating type A of Rhodosporidium toruloides. This is Rhodotorucin-A peptides type 2 (RHA2) from Rhodotorula toruloides (Yeast).